Reading from the N-terminus, the 236-residue chain is 2-C-methyl-D-erythritol 4-phosphate cytidylyltransferase (236 aa).

This sequence belongs to the IspD/TarI cytidylyltransferase family. IspD subfamily. In terms of assembly, homodimer.

It catalyses the reaction 2-C-methyl-D-erythritol 4-phosphate + CTP + H(+) = 4-CDP-2-C-methyl-D-erythritol + diphosphate. It functions in the pathway isoprenoid biosynthesis; isopentenyl diphosphate biosynthesis via DXP pathway; isopentenyl diphosphate from 1-deoxy-D-xylulose 5-phosphate: step 2/6. In terms of biological role, catalyzes the formation of 4-diphosphocytidyl-2-C-methyl-D-erythritol from CTP and 2-C-methyl-D-erythritol 4-phosphate (MEP). In Escherichia coli O45:K1 (strain S88 / ExPEC), this protein is 2-C-methyl-D-erythritol 4-phosphate cytidylyltransferase.